The sequence spans 87 residues: Large ribosomal subunit protein bL27 (87 aa).

The disordered stretch occupies residues 1–20 (MARKRGGSGSKNGRDSNPKY).

It belongs to the bacterial ribosomal protein bL27 family.

This Treponema pallidum (strain Nichols) protein is Large ribosomal subunit protein bL27 (rpmA).